Consider the following 705-residue polypeptide: Polyribonucleotide nucleotidyltransferase (705 aa).

Positions 487 and 493 each coordinate Mg(2+). Residues 554 to 613 (PKILTMSINPDKIRDVIGPSGKQINKIIEDTGVKIDIEQDGTIFISSTDESMNQKAKKII) enclose the KH domain. One can recognise an S1 motif domain in the interval 623 to 691 (GQLYLGKVKR…KQGRVNLSRK (69 aa)).

This sequence belongs to the polyribonucleotide nucleotidyltransferase family. It depends on Mg(2+) as a cofactor.

Its subcellular location is the cytoplasm. It carries out the reaction RNA(n+1) + phosphate = RNA(n) + a ribonucleoside 5'-diphosphate. Involved in mRNA degradation. Catalyzes the phosphorolysis of single-stranded polyribonucleotides processively in the 3'- to 5'-direction. This chain is Polyribonucleotide nucleotidyltransferase, found in Bacillus licheniformis (strain ATCC 14580 / DSM 13 / JCM 2505 / CCUG 7422 / NBRC 12200 / NCIMB 9375 / NCTC 10341 / NRRL NRS-1264 / Gibson 46).